Consider the following 88-residue polypeptide: Co-chaperonin GroES (88 aa).

This sequence belongs to the GroES chaperonin family. In terms of assembly, heptamer of 7 subunits arranged in a ring. Interacts with the chaperonin GroEL.

The protein resides in the cytoplasm. Together with the chaperonin GroEL, plays an essential role in assisting protein folding. The GroEL-GroES system forms a nano-cage that allows encapsulation of the non-native substrate proteins and provides a physical environment optimized to promote and accelerate protein folding. GroES binds to the apical surface of the GroEL ring, thereby capping the opening of the GroEL channel. In Treponema pallidum (strain Nichols), this protein is Co-chaperonin GroES.